Consider the following 702-residue polypeptide: uncharacterized protein (702 aa).

5 stretches are compositionally biased toward low complexity: residues 306–384 (NNNN…NNNN), 488–511 (PTKT…TNIT), 559–590 (QQSQ…NNNN), 603–612 (SNQNSNNNNQ), and 621–639 (NNNN…NNNN). Disordered regions lie at residues 306–385 (NNNN…NNNE), 488–513 (PTKT…ITYG), and 551–645 (STMN…NSRY). Positions 337–489 (NNINNNINNN…IKSLDILSPT (153 aa)) constitute a VPS9 domain.

This is an uncharacterized protein from Dictyostelium discoideum (Social amoeba).